Consider the following 540-residue polypeptide: CUB domain-containing protein 2 (540 aa).

Positions 1-24 (MLAELGACLLLAMVLLDSDPGTQA) are cleaved as a signal peptide. Residues 25–516 (MEGVKCGGVL…GTMVTQDTSD (492 aa)) are Extracellular-facing. 6 disulfides stabilise this stretch: cysteine 30/cysteine 56, cysteine 83/cysteine 106, cysteine 145/cysteine 171, cysteine 198/cysteine 218, cysteine 257/cysteine 283, and cysteine 314/cysteine 336. 3 CUB domains span residues 30–143 (CGGV…YQKD), 145–255 (CGGV…YFSG), and 257–373 (CQEV…YIGV). N-linked (GlcNAc...) asparagine glycosylation occurs at asparagine 40. A glycan (N-linked (GlcNAc...) asparagine) is linked at asparagine 267. 3 N-linked (GlcNAc...) asparagine glycosylation sites follow: asparagine 377, asparagine 435, and asparagine 436. Residues 517–537 (IVFLGLCILAGVLMIIAIVVL) form a helical membrane-spanning segment. The Cytoplasmic portion of the chain corresponds to 538-540 (MLL).

It localises to the membrane. The chain is CUB domain-containing protein 2 (Cdcp2) from Mus musculus (Mouse).